We begin with the raw amino-acid sequence, 243 residues long: Sarcospan (243 aa).

Positions 1 to 43 are disordered; sequence MGKNKQPRGQQRQGGPPAADAAGPDDMEPKKGTGAPKECGEEE. The Cytoplasmic segment spans residues 1-53; it reads MGKNKQPRGQQRQGGPPAADAAGPDDMEPKKGTGAPKECGEEEPRTCCGCRFP. A compositionally biased stretch (low complexity) spans 7 to 24; it reads PRGQQRQGGPPAADAAGP. A helical transmembrane segment spans residues 54–74; sequence LLLALLQLALGIAVTVVGFLM. Residues 75-86 lie on the Extracellular side of the membrane; that stretch reads ASISSSLLVRDT. The helical transmembrane segment at 87–107 threads the bilayer; that stretch reads PFWAGIIVCLVAYLGLFMLCV. Over 108 to 122 the chain is Cytoplasmic; it reads SYQVDERTCIQFSMK. A helical membrane pass occupies residues 123–143; that stretch reads LLYFLLSALGLTVCVLAVAFA. Over 144–193 the chain is Extracellular; that stretch reads AHHYSQLTQFTCETTLDSCQCKLPSSEPLSRTFVYRDVTDCTSVTGTFKL. A helical membrane pass occupies residues 194–214; it reads FLLIQMILNLVCGLVCLLACF. At 215 to 243 the chain is on the cytoplasmic side; sequence VMWKHRYQVFYVGVRICSLTASEGPQQKI.

Isoform 1 is expressed exclusively in heart and skeletal muscle. Isoform 2 is expressed in heart, skeletal muscle, thymus, prostate, testis, ovary, small intestine, colon and spleen.

The protein localises to the cell membrane. Its subcellular location is the sarcolemma. The protein resides in the postsynaptic cell membrane. Its function is as follows. Component of the dystrophin-glycoprotein complex (DGC), a complex that spans the muscle plasma membrane and forms a link between the F-actin cytoskeleton and the extracellular matrix. Preferentially associates with the sarcoglycan subcomplex of the DGC. In Homo sapiens (Human), this protein is Sarcospan (SSPN).